A 40-amino-acid polypeptide reads, in one-letter code: Metallothionein-1 (40 aa).

Belongs to the metallothionein superfamily. Type 5 family.

This protein binds cations of several transition elements. It is thought to be involved in detoxification processes. In Drosophila melanogaster (Fruit fly), this protein is Metallothionein-1 (MtnA).